Consider the following 729-residue polypeptide: Rho GTPase-activating protein 28 (729 aa).

2 disordered regions span residues 20–42 (AQPPNAESRCAPRAAASHPLSRK) and 55–105 (SNES…AEVT). Over residues 65-75 (SRSNSEASVDS) the composition is skewed to polar residues. Serine 72 bears the Phosphoserine mark. Over residues 80 to 89 (DFWREIESIK) the composition is skewed to basic and acidic residues. Threonine 159 carries the post-translational modification Phosphothreonine. The disordered stretch occupies residues 176-236 (GVSESPPRDT…SQDKEGSFAV (61 aa)). A compositionally biased stretch (basic and acidic residues) spans 195–204 (GTKEERELPR). The segment covering 217–226 (SLNSTTLSDA) has biased composition (polar residues). In terms of domain architecture, Rho-GAP spans 380 to 577 (VPLTVLLDGD…LMLKYQKILW (198 aa)). The segment at 612–631 (TLERETASPKTSKVLQKSPS) is disordered. The segment covering 619–630 (SPKTSKVLQKSP) has biased composition (polar residues).

Expressed in testis. Expressed at moderate level in kidney and ovary, and weakly expressed in spleen and skeletal muscle.

Its function is as follows. GTPase activator for the Rho-type GTPases by converting them to an inactive GDP-bound state. In Homo sapiens (Human), this protein is Rho GTPase-activating protein 28 (ARHGAP28).